A 275-amino-acid chain; its full sequence is Penicillin-insensitive murein endopeptidase (275 aa).

The N-terminal stretch at 1 to 19 (MKKWIAGLLALIAISPVMA) is a signal peptide. 3 cysteine pairs are disulfide-bonded: Cys-44-Cys-264, Cys-187-Cys-235, and Cys-216-Cys-223. Residues His-110, His-113, Asp-120, Asp-147, and His-211 each contribute to the Zn(2+) site. The disordered stretch occupies residues 234–262 (GCGAELESWFQPHQPSAKPGKTLPPPLPP).

This sequence belongs to the peptidase M74 family. As to quaternary structure, dimer. It depends on Zn(2+) as a cofactor.

Its subcellular location is the periplasm. Murein endopeptidase that cleaves the D-alanyl-meso-2,6-diamino-pimelyl amide bond that connects peptidoglycan strands. Likely plays a role in the removal of murein from the sacculus. The chain is Penicillin-insensitive murein endopeptidase from Yersinia enterocolitica serotype O:8 / biotype 1B (strain NCTC 13174 / 8081).